The chain runs to 574 residues: Developmental and secondary metabolism regulator veA (574 aa).

Disordered regions lie at residues 1-22 (MATR…SRIT), 39-60 (ERAR…VDPP), 255-500 (RSSD…GAGK), and 513-540 (RSYE…YPRR). The region spanning 25-230 (GKKLTYKLNV…AEQGCRVRIR (206 aa)) is the Velvet domain. The Nuclear localization signal signature appears at 39–44 (ERARAC). 2 stretches are compositionally biased toward pro residues: residues 314-323 (RPLPPAPGPA) and 330-341 (PAPPAPPAPPSH). 4 stretches are compositionally biased toward polar residues: residues 343–353 (PGYQSHLSFGS), 385–394 (HARNPSTSAE), 406–415 (RMSTERSSYP), and 448–458 (VAQSAAPRSQT). The interval 457–498 (QTPSSSLVPSLPPLKALSGDYPNNLSQSSSSTSQSPSHDLGA) is PEST. Composition is skewed to low complexity over residues 459–474 (PSSS…KALS) and 482–493 (SQSSSSTSQSPS). Residues 513–525 (RSYEDSFGHDDRP) are compositionally biased toward basic and acidic residues.

It belongs to the velvet family. VeA subfamily. As to quaternary structure, component of the heterotrimeric velvet complex composed of laeA, veA and velB; VeA acting as a bridging protein between laeA and velB.

The protein localises to the nucleus. It is found in the cytoplasm. Functionally, component of the velvet transcription factor complex that controls sexual/asexual developmental ratio in response to light, promoting sexual development in the darkness while stimulating asexual sporulation under illumination. The velvet complex hat acts as a global regulator for secondary metabolite gene expression. Controls the expression of the cyclopiazonic acid, aflatrem, and aflatoxin gene clusters. Controls the expression of the sclerotium-specific pigment asparasone A gene cluster. Controls the expression of the aflavarin gene cluster. also controls the production of hydrolases and other extracellular proteins during growth on natural starch-based substrates. Regulates genes involved in the High Osmolarity Glycerol (HOG) signaling pathway. Required for the conidial and sclerotial density-dependent production. The chain is Developmental and secondary metabolism regulator veA from Aspergillus flavus (strain ATCC 200026 / FGSC A1120 / IAM 13836 / NRRL 3357 / JCM 12722 / SRRC 167).